The sequence spans 59 residues: MRLSYLSLALAIIFVLTIMHASNVEAKASADPEPDAVGSINVKNLMDMIREQITSRLKK.

A signal peptide spans 1–21 (MRLSYLSLALAIIFVLTIMHA). Positions 22 to 38 (SNVEAKASADPEPDAVG) are excised as a propeptide.

Expressed by the venom gland.

The protein localises to the secreted. In terms of biological role, may have antimicrobial properties, like most ant linear peptides. The chain is U-myrmeciitoxin(01)-Mg5a from Myrmecia gulosa (Red bulldog ant).